Consider the following 210-residue polypeptide: Probable GTP-binding protein EngB (210 aa).

The EngB-type G domain maps to 25 to 199; that stretch reads RGIEVAFAGR…RQKLDSWFSE (175 aa). Residues 33-40, 60-64, 78-81, 145-148, and 178-180 contribute to the GTP site; these read GRSNAGKS, GRTQL, DLPG, TKAD, and FSS. Serine 40 and threonine 62 together coordinate Mg(2+).

It belongs to the TRAFAC class TrmE-Era-EngA-EngB-Septin-like GTPase superfamily. EngB GTPase family. The cofactor is Mg(2+).

Functionally, necessary for normal cell division and for the maintenance of normal septation. This is Probable GTP-binding protein EngB from Salmonella paratyphi B (strain ATCC BAA-1250 / SPB7).